The following is a 279-amino-acid chain: uncharacterized protein (279 aa).

Over residues 1–29 (MSSRYTSSYTPSSRYGSGWDYSSSYSSSR) the composition is skewed to low complexity. Disordered stretches follow at residues 1 to 111 (MSSR…APRE) and 137 to 233 (LTLA…AEAL). The segment covering 30–44 (TSRDRDTGSYRDRDY) has biased composition (basic and acidic residues). The segment covering 45 to 59 (SSTSYTSTRPRYSTY) has biased composition (low complexity). The segment covering 142–153 (EPEESEEEEDDE) has biased composition (acidic residues). Low complexity predominate over residues 170 to 186 (ESSPVSSPVKEVSSAAS). Over residues 189 to 205 (ANDNGNETENRTPSPTV) the composition is skewed to polar residues. The span at 221-233 (SDVKKEGGDAEAL) shows a compositional bias: basic and acidic residues.

This is an uncharacterized protein from Caenorhabditis elegans.